The chain runs to 155 residues: Ubiquitin-conjugating enzyme E2 14 (155 aa).

The UBC core domain occupies 7–154 (SSSRRLTKEY…ARDYVEQFAK (148 aa)). Catalysis depends on Cys-91, which acts as the Glycyl thioester intermediate.

It belongs to the ubiquitin-conjugating enzyme family.

The catalysed reaction is S-ubiquitinyl-[E1 ubiquitin-activating enzyme]-L-cysteine + [E2 ubiquitin-conjugating enzyme]-L-cysteine = [E1 ubiquitin-activating enzyme]-L-cysteine + S-ubiquitinyl-[E2 ubiquitin-conjugating enzyme]-L-cysteine.. The protein operates within protein modification; protein ubiquitination. In terms of biological role, catalyzes the covalent attachment of ubiquitin to other proteins. Mediates the selective degradation of short-lived and abnormal proteins. This chain is Ubiquitin-conjugating enzyme E2 14 (ubc14), found in Schizosaccharomyces pombe (strain 972 / ATCC 24843) (Fission yeast).